The following is a 728-amino-acid chain: Histone demethylase JHD2 (728 aa).

The JmjN domain occupies 4–47 (IPALYPTEQEFKNPIDYLSNPHIKRLGVRYGMVKVVPPNGFCPP). Residues 235 to 285 (DDACIVCRKTNDPKRTILCDSCDKPFHIYCLSPPLERVPSGDWICNTCIVG) form a PHD-type zinc finger. One can recognise a JmjC domain in the interval 381–549 (KYCDHPMNLT…YGFGAITDYK (169 aa)). Residues His427, Asp430, and His517 each contribute to the Fe cation site.

Belongs to the JARID1 histone demethylase family. It depends on Fe(2+) as a cofactor.

The protein resides in the nucleus. The enzyme catalyses N(6),N(6),N(6)-trimethyl-L-lysyl(4)-[histone H3] + 3 2-oxoglutarate + 3 O2 = L-lysyl(4)-[histone H3] + 3 formaldehyde + 3 succinate + 3 CO2. Histone demethylase that demethylates 'Lys-4' of histone H3, thereby playing a central role in histone code. Demethylates trimethylated H3 'Lys-4'. In Saccharomyces cerevisiae (strain ATCC 204508 / S288c) (Baker's yeast), this protein is Histone demethylase JHD2 (JHD2).